The following is a 308-amino-acid chain: ALMKTKLFINNTMASSGIGLETDAIKAAQAVYCQGQICMSEEQEALCPFDRLEGEVAIVVGAGPSERRRLLLKVADVMESKTPKFIEVMAMEVGASALWAGFNVHASANVFREAASLATQIQGTPLGFAVPTEAFEMATPDGTGALNYGVRRPKGVIGVISPWNLPLLLMTWKVGPALACGNTVVVKPSRINGLFKDAIDKGAKVVCGGMAQGAVGVLNYLNRVNAVQPGGTVISLCGPASAGFDIANDSVYGLSSGDDMIKQLTPLGFAAKPEDNVEPYLLGASRKQGKGITTTVISIDGGMALGAG.

This sequence belongs to the aldehyde dehydrogenase family.

Its subcellular location is the periplasm. With respect to regulation, completely inhibited by HgCl(2), CoCl(2) and CaCl(2). Catalyzes the NAD(+)-dependent conversion of limonin. The chain is Limonin dehydrogenase from Pseudomonas putida (Arthrobacter siderocapsulatus).